The sequence spans 122 residues: Large ribosomal subunit protein uL14c (122 aa).

The protein belongs to the universal ribosomal protein uL14 family. Part of the 50S ribosomal subunit.

It is found in the plastid. The protein resides in the chloroplast. Binds to 23S rRNA. The protein is Large ribosomal subunit protein uL14c of Angiopteris evecta (Mule's foot fern).